Reading from the N-terminus, the 162-residue chain is Phosphopantetheine adenylyltransferase (162 aa).

Ser-9 contacts substrate. ATP is bound by residues 9 to 10 and His-17; that span reads SF. Substrate is bound by residues Lys-41, Ile-77, and Lys-91. Residues 92 to 94, Glu-102, and 126 to 132 each bind ATP; these read GLR and YAFLSSS.

This sequence belongs to the bacterial CoaD family. In terms of assembly, homohexamer. Mg(2+) is required as a cofactor.

It localises to the cytoplasm. The catalysed reaction is (R)-4'-phosphopantetheine + ATP + H(+) = 3'-dephospho-CoA + diphosphate. The protein operates within cofactor biosynthesis; coenzyme A biosynthesis; CoA from (R)-pantothenate: step 4/5. Its function is as follows. Reversibly transfers an adenylyl group from ATP to 4'-phosphopantetheine, yielding dephospho-CoA (dPCoA) and pyrophosphate. This is Phosphopantetheine adenylyltransferase from Frankia casuarinae (strain DSM 45818 / CECT 9043 / HFP020203 / CcI3).